A 186-amino-acid chain; its full sequence is Transcription factor pgmR (186 aa).

Residues 19-46 (CDECGAAKLKCDRGHPSCGRCISLGLKC) constitute a DNA-binding region (zn(2)-C6 fungal-type). A disordered region spans residues 52–98 (RKAGKPRRDAQSATRPPPTPGDSGPPLDYNSFGPTSPPSSVGDGATL).

The protein localises to the nucleus. Transcription factor that specifically regulates the expression of the pgm gene cluster that mediates the biosynthesis of cryptic naphthoquinones derived pigments responsible for the coloration of the fruiting bodies. In Aspergillus terreus (strain NIH 2624 / FGSC A1156), this protein is Transcription factor pgmR.